The chain runs to 306 residues: Probable L,D-transpeptidase YbiS (306 aa).

A signal peptide spans 1–24 (MNMKLKTLFAAAFAVVGFCSTASA). Positions 99-234 (EGIVINSAEM…VPVGTRVQFI (136 aa)) constitute a L,D-TPase catalytic domain. Catalysis depends on His-194, which acts as the Proton donor/acceptor. The Nucleophile role is filled by Cys-210.

Belongs to the YkuD family.

The protein localises to the periplasm. It functions in the pathway cell wall biogenesis; peptidoglycan biosynthesis. Responsible, at least in part, for anchoring of the major outer membrane lipoprotein (Lpp) to the peptidoglycan via a meso-diaminopimelyl-L-Lys- bond on the terminal residue of Lpp. The sequence is that of Probable L,D-transpeptidase YbiS (ybiS) from Escherichia coli O6:H1 (strain CFT073 / ATCC 700928 / UPEC).